A 367-amino-acid chain; its full sequence is Protein P39 (367 aa).

Coiled coils occupy residues 165-202 (REGE…SKQQ) and 235-308 (EMIE…SDRL).

Might be involved in virion assembly and vector-mediated transmission of the virus. In Peanut clump virus (isolate 87/TGTA2) (PCV), this protein is Protein P39.